Consider the following 212-residue polypeptide: Large ribosomal subunit protein uL1 (212 aa).

It belongs to the universal ribosomal protein uL1 family. Part of the 50S ribosomal subunit.

Its function is as follows. Binds directly to 23S rRNA. Probably involved in E site tRNA release. Functionally, protein L1 is also a translational repressor protein, it controls the translation of its operon by binding to its mRNA. The protein is Large ribosomal subunit protein uL1 of Methanobrevibacter smithii (strain ATCC 35061 / DSM 861 / OCM 144 / PS).